The following is a 170-amino-acid chain: Ubiquitin-conjugating enzyme E2 G1 (170 aa).

N-acetylmethionine is present on methionine 1. The residue at position 2 (threonine 2) is an N-acetylthreonine; in Ubiquitin-conjugating enzyme E2 G1, N-terminally processed. The region spanning 5–166 (QSALLLRRQL…VARCVRKSQE (162 aa)) is the UBC core domain. The active-site Glycyl thioester intermediate is the cysteine 90.

Belongs to the ubiquitin-conjugating enzyme family. Post-translationally, autoubiquitinated.

It catalyses the reaction S-ubiquitinyl-[E1 ubiquitin-activating enzyme]-L-cysteine + [E2 ubiquitin-conjugating enzyme]-L-cysteine = [E1 ubiquitin-activating enzyme]-L-cysteine + S-ubiquitinyl-[E2 ubiquitin-conjugating enzyme]-L-cysteine.. It participates in protein modification; protein ubiquitination. Its function is as follows. Accepts ubiquitin from the E1 complex and catalyzes its covalent attachment to other proteins. In vitro catalyzes 'Lys-48'-, as well as 'Lys-63'-linked polyubiquitination. May be involved in degradation of muscle-specific proteins. Mediates polyubiquitination of CYP3A4. The sequence is that of Ubiquitin-conjugating enzyme E2 G1 (UBE2G1) from Macaca fascicularis (Crab-eating macaque).